The following is a 130-amino-acid chain: Small ribosomal subunit protein uS9 (130 aa).

The interval 105-130 is disordered; the sequence is TRDSRMKERKKPGLKGARRAPQFSKR. The segment covering 111-130 has biased composition (basic residues); that stretch reads KERKKPGLKGARRAPQFSKR.

It belongs to the universal ribosomal protein uS9 family.

The sequence is that of Small ribosomal subunit protein uS9 from Listeria welshimeri serovar 6b (strain ATCC 35897 / DSM 20650 / CCUG 15529 / CIP 8149 / NCTC 11857 / SLCC 5334 / V8).